A 289-amino-acid chain; its full sequence is Nitrogenase iron protein (289 aa).

Position 8 to 15 (glycine 8 to serine 15) interacts with ATP. Cysteine 96 contributes to the [4Fe-4S] cluster binding site. At arginine 99 the chain carries ADP-ribosylarginine; by dinitrogenase reductase ADP-ribosyltransferase. Position 130 (cysteine 130) interacts with [4Fe-4S] cluster.

The protein belongs to the NifH/BchL/ChlL family. As to quaternary structure, homodimer. The cofactor is [4Fe-4S] cluster. In terms of processing, the reversible ADP-ribosylation of Arg-99 inactivates the nitrogenase reductase and regulates nitrogenase activity.

It carries out the reaction N2 + 8 reduced [2Fe-2S]-[ferredoxin] + 16 ATP + 16 H2O = H2 + 8 oxidized [2Fe-2S]-[ferredoxin] + 2 NH4(+) + 16 ADP + 16 phosphate + 6 H(+). Functionally, the key enzymatic reactions in nitrogen fixation are catalyzed by the nitrogenase complex, which has 2 components: the iron protein and the molybdenum-iron protein. The sequence is that of Nitrogenase iron protein from Parafrankia sp. (strain EAN1pec).